We begin with the raw amino-acid sequence, 275 residues long: Centromere protein V (275 aa).

Composition is skewed to low complexity over residues 1–10 (MRRSRSSAAA) and 17–51 (RSGA…QAGS). The interval 1–109 (MRRSRSSAAA…ATPTSSASNL (109 aa)) is disordered. Phosphoserine occurs at positions 18 and 21. R43 is modified (omega-N-methylarginine). Residues 79-100 (GEPPPPELALLPPPPPPPPTPA) are compositionally biased toward pro residues. 3 positions are modified to phosphothreonine: T98, T101, and T103. Residues 148 to 260 (HTGGCHCGAV…TEEFNGSDWE (113 aa)) enclose the CENP-V/GFA domain. Residues C152, C154, C172, C174, C177, C216, and C219 each contribute to the Zn(2+) site. S257 carries the post-translational modification Phosphoserine.

This sequence belongs to the Gfa family. Zn(2+) serves as cofactor.

It is found in the chromosome. The protein resides in the centromere. Its subcellular location is the kinetochore. The protein localises to the nucleus. It localises to the cytoplasm. It is found in the cytoskeleton. The protein resides in the spindle. In terms of biological role, required for distribution of pericentromeric heterochromatin in interphase nuclei and for centromere formation and organization, chromosome alignment and cytokinesis. The polypeptide is Centromere protein V (CENPV) (Homo sapiens (Human)).